We begin with the raw amino-acid sequence, 118 residues long: Large ribosomal subunit protein bL19 (118 aa).

It belongs to the bacterial ribosomal protein bL19 family.

This protein is located at the 30S-50S ribosomal subunit interface and may play a role in the structure and function of the aminoacyl-tRNA binding site. This is Large ribosomal subunit protein bL19 from Geobacter sulfurreducens (strain ATCC 51573 / DSM 12127 / PCA).